The following is a 437-amino-acid chain: GTPase Der (437 aa).

2 consecutive EngA-type G domains span residues 3-167 (ALVA…PAEN) and 177-353 (PRIA…AHRS). GTP-binding positions include 9 to 16 (GRPNVGKS), 56 to 60 (DTGGW), 119 to 122 (NKVD), 183 to 190 (GRPNAGKS), 230 to 234 (DTAGI), and 295 to 298 (NKWD). One can recognise a KH-like domain in the interval 354-437 (TRIPTHKLNE…TPINIFIREK (84 aa)).

It belongs to the TRAFAC class TrmE-Era-EngA-EngB-Septin-like GTPase superfamily. EngA (Der) GTPase family. Associates with the 50S ribosomal subunit.

GTPase that plays an essential role in the late steps of ribosome biogenesis. The polypeptide is GTPase Der (Porphyromonas gingivalis (strain ATCC BAA-308 / W83)).